The following is a 158-amino-acid chain: 6,7-dimethyl-8-ribityllumazine synthase 2 (158 aa).

Residues Trp-20, 54 to 56 (AYE), and 78 to 80 (FVI) contribute to the 5-amino-6-(D-ribitylamino)uracil site. Catalysis depends on Arg-86, which acts as the Proton donor. A 5-amino-6-(D-ribitylamino)uracil-binding site is contributed by Ser-111. His-125 is a (2S)-2-hydroxy-3-oxobutyl phosphate binding site.

It belongs to the DMRL synthase family. Homodecamer, arranged as a dimer of pentamers.

The protein localises to the cytoplasm. The enzyme catalyses (2S)-2-hydroxy-3-oxobutyl phosphate + 5-amino-6-(D-ribitylamino)uracil = 6,7-dimethyl-8-(1-D-ribityl)lumazine + phosphate + 2 H2O + H(+). It functions in the pathway cofactor biosynthesis; riboflavin biosynthesis; riboflavin from 2-hydroxy-3-oxobutyl phosphate and 5-amino-6-(D-ribitylamino)uracil: step 1/2. In terms of biological role, catalyzes the formation of 6,7-dimethyl-8-ribityllumazine by condensation of 5-amino-6-(D-ribitylamino)uracil with 3,4-dihydroxy-2-butanone 4-phosphate. This is the penultimate step in the biosynthesis of riboflavin. The isozyme RibH2 but not RibH1 is essential for Brucella intracellular survival and replication inside macrophages or in mice. Displays low catalytic activity in comparison with the isozyme RibH1. Is a highly immunogenic protein. Activates dendritic cells (DCs) in vitro, increasing the levels of costimulatory molecules and the secretion of pro-inflammatory cytokines, and recruits DCs, B cells and CD8+ T cells in vivo, both effects in a TLR4-dependent manner. Induces the cross presentation of covalently attached peptides and generates a strong and long-lasting humoral immune response without adjuvants; TLR4 signaling is necessary for the induction of the cytotoxic response but not for antigen cross presentation. Elicits a TLR4-mediated protective response against B16 melanoma in mice, slowing tumor growth and prolonging mice survival. The sequence is that of 6,7-dimethyl-8-ribityllumazine synthase 2 from Brucella abortus (strain 2308).